Reading from the N-terminus, the 300-residue chain is Bifunctional protein FolD (300 aa).

Residues 169 to 171 (GRG), serine 196, and isoleucine 237 each bind NADP(+).

Belongs to the tetrahydrofolate dehydrogenase/cyclohydrolase family. Homodimer.

The enzyme catalyses (6R)-5,10-methylene-5,6,7,8-tetrahydrofolate + NADP(+) = (6R)-5,10-methenyltetrahydrofolate + NADPH. It catalyses the reaction (6R)-5,10-methenyltetrahydrofolate + H2O = (6R)-10-formyltetrahydrofolate + H(+). Its pathway is one-carbon metabolism; tetrahydrofolate interconversion. Its function is as follows. Catalyzes the oxidation of 5,10-methylenetetrahydrofolate to 5,10-methenyltetrahydrofolate and then the hydrolysis of 5,10-methenyltetrahydrofolate to 10-formyltetrahydrofolate. The protein is Bifunctional protein FolD of Clavibacter michiganensis subsp. michiganensis (strain NCPPB 382).